The primary structure comprises 61 residues: Small ribosomal subunit protein uS14 (61 aa).

Cys-24, Cys-27, Cys-40, and Cys-43 together coordinate Zn(2+).

Belongs to the universal ribosomal protein uS14 family. Zinc-binding uS14 subfamily. In terms of assembly, part of the 30S ribosomal subunit. Contacts proteins S3 and S10. The cofactor is Zn(2+).

In terms of biological role, binds 16S rRNA, required for the assembly of 30S particles and may also be responsible for determining the conformation of the 16S rRNA at the A site. This Caldicellulosiruptor bescii (strain ATCC BAA-1888 / DSM 6725 / KCTC 15123 / Z-1320) (Anaerocellum thermophilum) protein is Small ribosomal subunit protein uS14.